The primary structure comprises 218 residues: N-(5'-phosphoribosyl)anthranilate isomerase (218 aa).

The protein belongs to the TrpF family.

The catalysed reaction is N-(5-phospho-beta-D-ribosyl)anthranilate = 1-(2-carboxyphenylamino)-1-deoxy-D-ribulose 5-phosphate. The protein operates within amino-acid biosynthesis; L-tryptophan biosynthesis; L-tryptophan from chorismate: step 3/5. The chain is N-(5'-phosphoribosyl)anthranilate isomerase from Acetivibrio thermocellus (strain ATCC 27405 / DSM 1237 / JCM 9322 / NBRC 103400 / NCIMB 10682 / NRRL B-4536 / VPI 7372) (Clostridium thermocellum).